We begin with the raw amino-acid sequence, 134 residues long: Protein E6 (134 aa).

Zinc fingers lie at residues 15–51 (CLQCKKALGSLDALKCKNHKYRRVHRGGKPYGMCQIC) and 88–124 (CYYCGCVLSDSEKDRHALDHEGYLYVRGRARGRCYSC).

It belongs to the papillomaviridae E6 protein family. As to quaternary structure, forms homodimers. Interacts with ubiquitin-protein ligase UBE3A/E6-AP; this interaction stimulates UBE3A ubiquitin activity. Interacts with host BAK1.

Its subcellular location is the host cytoplasm. The protein localises to the host nucleus. In terms of biological role, plays a major role in the induction and maintenance of cellular transformation. E6 associates with host UBE3A/E6-AP ubiquitin-protein ligase and modulates its activity. Protects host keratinocytes from apoptosis by mediating the degradation of host BAK1. May also inhibit host immune response. This is Protein E6 from Bos taurus (Bovine).